Reading from the N-terminus, the 430-residue chain is 5-methylthioadenosine/S-adenosylhomocysteine deaminase (430 aa).

Residues His-63 and His-65 each contribute to the Zn(2+) site. Positions 92, 144, and 182 each coordinate substrate. His-209 contributes to the Zn(2+) binding site. Substrate is bound by residues Glu-212 and Asp-297. Residue Asp-297 coordinates Zn(2+).

This sequence belongs to the metallo-dependent hydrolases superfamily. MTA/SAH deaminase family. The cofactor is Zn(2+).

It carries out the reaction S-adenosyl-L-homocysteine + H2O + H(+) = S-inosyl-L-homocysteine + NH4(+). The enzyme catalyses S-methyl-5'-thioadenosine + H2O + H(+) = S-methyl-5'-thioinosine + NH4(+). Functionally, catalyzes the deamination of 5-methylthioadenosine and S-adenosyl-L-homocysteine into 5-methylthioinosine and S-inosyl-L-homocysteine, respectively. Is also able to deaminate adenosine. This Desulforudis audaxviator (strain MP104C) protein is 5-methylthioadenosine/S-adenosylhomocysteine deaminase.